We begin with the raw amino-acid sequence, 278 residues long: Large ribosomal subunit protein uL2 (278 aa).

Disordered regions lie at residues 28 to 58 (TPEKSLTRPLPKKGGRNNQGRITTRHQGGGH) and 223 to 278 (GVVM…KNKR). Over residues 43 to 53 (RNNQGRITTRH) the composition is skewed to polar residues. Over residues 268–278 (IRRRKTGKNKR) the composition is skewed to basic residues.

The protein belongs to the universal ribosomal protein uL2 family. In terms of assembly, part of the 50S ribosomal subunit. Forms a bridge to the 30S subunit in the 70S ribosome.

Functionally, one of the primary rRNA binding proteins. Required for association of the 30S and 50S subunits to form the 70S ribosome, for tRNA binding and peptide bond formation. It has been suggested to have peptidyltransferase activity; this is somewhat controversial. Makes several contacts with the 16S rRNA in the 70S ribosome. In Nocardioides sp. (strain ATCC BAA-499 / JS614), this protein is Large ribosomal subunit protein uL2.